Consider the following 312-residue polypeptide: Dehydrin CAS31 (312 aa).

Disordered stretches follow at residues 1–88 (MSQY…HTGG) and 248–287 (GTEQNTYGTGTGTGHGTTGYGSTGTGHGTTGYGDEQHHGE). Polar residues predominate over residues 21 to 30 (PLTSQGQVDQ). Positions 35 to 46 (ISGGGMTGATGH) are enriched in gly residues. A compositionally biased stretch (low complexity) spans 55–66 (HGVGVDQTTGFG). 2 stretches are compositionally biased toward gly residues: residues 67–88 (SNTGTGTGYGTHTGSGGTHTGG) and 256–278 (TGTGTGHGTTGYGSTGTGHGTTG).

This sequence belongs to the plant dehydrin family. In terms of assembly, interacts with the leghemoglobin LB120-1 in the cytoplasm; this interaction leads to LB120-1 protection from denaturation under thermal and drought stresses. In terms of tissue distribution, expressed in nodules and roots.

It localises to the cytoplasm. Intrinsically disordered protein acting as a chaperone. Ensures leghemoglobins (e.g. LB120-1) protection from denaturation under thermal and drought stresses to delay root nodule nitrogenase inactivation and subsequent nodule senescence, thus supporting symbiotic nitrogen fixation (SNF). In Medicago truncatula (Barrel medic), this protein is Dehydrin CAS31.